The chain runs to 712 residues: Transferrin-binding protein B (712 aa).

The N-terminal stretch at 1-20 (MNNPLVNQAAMVLPVFLLSA) is a signal peptide. The N-palmitoyl cysteine moiety is linked to residue Cys-21. A lipid anchor (S-diacylglycerol cysteine) is attached at Cys-21. Residues 59-196 (GGYGFAMRLK…YHGKEPSRQL (138 aa)) are N-terminal handle domain. Disordered stretches follow at residues 78-104 (EDEV…PKRQ), 123-144 (PYLK…QPKN), 223-256 (IIQP…LTDG), 309-338 (NGKA…SLSG), 364-398 (SAKT…SSEN), 442-495 (ASES…GDTN), and 689-712 (NATN…QPVR). Basic and acidic residues predominate over residues 95 to 104 (DEPKELPKRQ). Residues 128 to 144 (SNHQNGNTGNGINQPKN) show a composition bias toward polar residues. The segment at 197 to 367 (PASGKITYKG…KVAVVGSAKT (171 aa)) is N-terminal beta barrel domain. 2 stretches are compositionally biased toward low complexity: residues 372–398 (ANGN…SSEN) and 446–459 (GNNQ…GGTA). Residues 389–555 (NGAAGTSSEN…SMFLQGERTD (167 aa)) are C-terminal handle domain. Residues 462 to 475 (RKFDHTPESDKKDA) show a composition bias toward basic and acidic residues. Composition is skewed to polar residues over residues 477–495 (AGTQ…GDTN) and 689–700 (NATNASGNSSAT). Residues 556–712 (EKEIPSEQNI…FGAKRQQPVR (157 aa)) form a C-terminal beta barrel domain region.

It belongs to the TbpB family. Isotype II subfamily. Binds only human holo-transferrin (TF), via the TF C-terminus. Forms a large complex with TF and TbpA. Interacts via its C-terminal domain with Slam1.

It is found in the cell outer membrane. It localises to the cell surface. Neisseria acquires iron by extracting it from serum transferrin (TF) in its human host. Acts as a TF receptor and is required for TF utilization. Involved in the initial capture of TF. Helps select only those TF molecules that can be used as an iron source and concentrates them on the cell surface, maintaining the iron-loaded status of the TF C-terminal lobe until its delivery to TbpA. The polypeptide is Transferrin-binding protein B (Neisseria meningitidis serogroup B (strain ATCC BAA-335 / MC58)).